A 224-amino-acid polypeptide reads, in one-letter code: uncharacterized protein (224 aa).

This sequence to M.tuberculosis Rv2558.

This is an uncharacterized protein from Mycobacterium tuberculosis (strain CDC 1551 / Oshkosh).